The chain runs to 447 residues: Putative branched-chain amino acid carrier protein SAR1419 (447 aa).

12 helical membrane-spanning segments follow: residues 6–26 (WVIG…IFPP), 40–60 (ILAF…VGAL), 74–94 (PKFS…LFAI), 114–134 (SSIA…YICL), 143–163 (IGSL…IKAY), 193–213 (GYLT…VNAV), 229–249 (LTAG…LGYI), 290–310 (LLGI…IVAV), 326–346 (FVLV…NAVI), 350–370 (IPVL…ILIA), 382–402 (IPVI…LGWL), and 417–437 (LEWF…GIFV).

This sequence belongs to the branched chain amino acid transporter family.

It is found in the cell membrane. In terms of biological role, component of the transport system for branched-chain amino acids (leucine, isoleucine and valine), which is coupled to a proton motive force (Potential). Contributes to NaCl tolerance. The sequence is that of Putative branched-chain amino acid carrier protein SAR1419 from Staphylococcus aureus (strain MRSA252).